Here is a 490-residue protein sequence, read N- to C-terminus: MILHGFHLSTSSHCLPFIFRHLFIFHSITALCDHVISNYCNSLKLSNNKFNQMLSKFVVVEVSNSNNTMTLVEYLVTHGFDKFAVVTDLVDHPSFKYKDGSSSPESPSTTASTAAQHTPPRTAVSTPTSINTPVPPHQNKQRHSIDKIAANLSTKKVSPSSIEKQLQRTSHNPLHQLSTPHALSQLQKLLEEQHKINQMNIQKKEQERQQAEIQRILLQQANAAQINHSFGLERLTPEYDDNHHSETISKASSEDLKTEPDSTDFGLGTSDDQVRASMLHLLHPVFAPAFGMLDAENIFGAASKPTTPASKRRNTDSNGAPSKKHRWLPVNELEESRSSRGKNCGRVHCKATYKCALCGKPTTLNSTGSRWNLLRHVIMIHSDCKPYKCWDCDFTGIKSNVISHARQCRHNAEDAHDITTDEMRAEWNLRLHECFPDYVRAKERGWQPEEVTVKKEEVEESPTLVKQELTLVKQEPTFAEQLEPMAQPLV.

3 disordered regions span residues 96-176, 236-262, and 302-326; these read KYKD…PLHQ, TPEY…EPDS, and ASKP…KKHR. Residues 101–110 are PEST; that stretch reads SSSPESPSTT. A compositionally biased stretch (low complexity) spans 101–120; it reads SSSPESPSTTASTAAQHTPP. 2 stretches are compositionally biased toward polar residues: residues 123-132 and 151-176; these read AVSTPTSINT and NLST…PLHQ. The span at 236–260 shows a compositional bias: basic and acidic residues; sequence TPEYDDNHHSETISKASSEDLKTEP. The C2H2-type; degenerate zinc-finger motif lies at 353–381; it reads YKCALCGKPTTLNSTGSRWNLLRHVIMIH.

As to expression, expressed in somatic gonads and germline precursors until the 50-cell stage. After the 100-cell stage, expression is seen in differentiating hypodermal and support cells (at protein level).

The protein resides in the nucleus. Functionally, probable transcription factor. Required to specify the fates of hypodermal and neuron-associated support cells. Functions during vulval development, playing a role in vulval precursor cell fate specification. Positively modulates expression of homeobox protein lin-39, perhaps by binding to regulatory regions of the lin-39 gene, acting in the vulval lineage. This chain is Transcription factor lin-26, found in Caenorhabditis elegans.